We begin with the raw amino-acid sequence, 1115 residues long: Integrin alpha-PS3 (1115 aa).

The signal sequence occupies residues 1-24 (MNAESTMFPHIFLALLALISHIEA). Residues 25–1054 (FNFMPRPSRV…PNIISKHQET (1030 aa)) are Extracellular-facing. FG-GAP repeat units follow at residues 39 to 99 (KHLK…VCSP), 113 to 174 (SEYT…STPQ), 193 to 246 (DNGN…VDNP), 278 to 335 (IPTP…GKSI), 336 to 397 (HKYH…FNFE), 398 to 453 (RQIL…GLRD), and 460 to 522 (DAPS…SESR). Residues asparagine 46, asparagine 82, and asparagine 166 are each glycosylated (N-linked (GlcNAc...) asparagine). Asparagine 438 carries an N-linked (GlcNAc...) asparagine glycan. Asparagine 696, asparagine 845, asparagine 868, and asparagine 964 each carry an N-linked (GlcNAc...) asparagine glycan. A helical transmembrane segment spans residues 1055 to 1075 (GLPIWIIIVSVIGGLLLLSAI). At 1076–1115 (SYLLYKFGFFNRTKKDELDRLVQQNPVEPEAENLNSGGNN) the chain is on the cytoplasmic side.

It belongs to the integrin alpha chain family. In terms of assembly, heterodimer of an alpha and a beta subunit. The alpha subunit is composed of a heavy and a light chain linked by a disulfide bond. Interacts with mys/beta-PS and Itgbn. Expressed in embryonic and larval hemocytes (at protein level). Expressed in tissues undergoing invagination, tissue movement and morphogenesis such as salivary gland, trachea, midgut endoderm, dorsal vessel, midline of the ventral nerve cord, amnioserosa and the amnioproctodeal invagination. Expressed in the mushroom body neuropil, brain areas that contain mushroom body processes in synaptic contact with other neurons. In egg chambers, expressed in border cells, in stretch cells and in dorsal appendage primordia.

It is found in the apical cell membrane. Its subcellular location is the lateral cell membrane. It localises to the cytoplasm. Its function is as follows. Integrin alpha-PS3/beta-PS is a receptor for laminin. Also binds to wb. Important during embryogenesis for the development of the trachea, dorsal vessel and salivary gland, as well as for dorsal closure. Required for short-term memory processes. Minor involvement in the establishment of the oocyte anterior-posterior length. Plays a role in timely border cell migration during oogenesis, probably mediated by JNK signaling. Integrin alpha-PS3/Itgbn is required for effective phagocytosis of apoptotic cells during embryonic development and for the phagocytic elimination of S.aureus by mediating the binding of S.aureus peptidoglycan to larval hemocytes, which probably activates a signaling pathway involving Rac1 and Rac2. Integrin alpha-PS3/Itgbn also regulates Fak activity during neuromuscular junction (NMJ) growth and is required for its activation in presynapsis of NMJs. Seems to be dispensable for major morphogenetic processes. The chain is Integrin alpha-PS3 (scb) from Drosophila melanogaster (Fruit fly).